The chain runs to 663 residues: MGAVSRDDYIALCTELVEHDRRYYVLNQPTISDYSYDVKMRELQEIEVQHPEWKVSWSPTMYLGDRPSGQFPVVPHSSPMLSIANVYSLQELEEFFSRTEKLLGYSPGYSLELKIDGIAVAIRYEKRLFAQALSRGNGVKGEDITANVSTIRSLPMRLPQEAPEDLEVRGEVFLSYEAFEELNACQREQGKLEFANPRNAAGGTLKLLSSKEAAKRKLDLSVYGLITDQKKRSHFENLQLCSQWGFFVAGMPKQCRSRQDVVERIREIEEMRAALPMAIDGVVIKVDNIAYQDRLGLTSKHYRWAIAYKYAPERAETILEDIVVQVGKTGILTPVAELAPVFLSGSRVSRASLYNQDEIEKKDIRIGDSVYVEKGGEVIPKIVGINLAKRSLESEPWKMPSLCPVCHEPVVKEKVSVRCVNPLCSGGMLEKICFFASKSALNIDHLGEKVVTKLFEVGLISSCSDIFALAEEDLKQVPGFKDRSIQNLLASIAGAKKVALDRLLTALSIPFVGSSGAIALADHFGTLDKVIEASLDELMSIEGIGPKVAASIVAFFSKHENREEIRRMQELGVQVLSKQSDKEAPLQGKVFVLTGTLQQMTRTQAEERIRCLGGKVSSSVSKSTYAVIAGSEAGGKLKKAQDLGLSIWNESELLRILDAKSVS.

NAD(+) contacts are provided by residues 33-37 (DYSYD), 82-83 (SI), and glutamate 112. The active-site N6-AMP-lysine intermediate is the lysine 114. Residues arginine 135, glutamate 171, lysine 285, and lysine 309 each coordinate NAD(+). Positions 403, 406, 419, and 424 each coordinate Zn(2+). Positions 581-663 (DKEAPLQGKV…LRILDAKSVS (83 aa)) constitute a BRCT domain.

It belongs to the NAD-dependent DNA ligase family. LigA subfamily. Requires Mg(2+) as cofactor. Mn(2+) is required as a cofactor.

It catalyses the reaction NAD(+) + (deoxyribonucleotide)n-3'-hydroxyl + 5'-phospho-(deoxyribonucleotide)m = (deoxyribonucleotide)n+m + AMP + beta-nicotinamide D-nucleotide.. Its function is as follows. DNA ligase that catalyzes the formation of phosphodiester linkages between 5'-phosphoryl and 3'-hydroxyl groups in double-stranded DNA using NAD as a coenzyme and as the energy source for the reaction. It is essential for DNA replication and repair of damaged DNA. This is DNA ligase from Chlamydia trachomatis serovar D (strain ATCC VR-885 / DSM 19411 / UW-3/Cx).